The following is a 448-amino-acid chain: Mitochondrial distribution and morphology protein 10 (448 aa).

The protein belongs to the MDM10 family. In terms of assembly, component of the ER-mitochondria encounter structure (ERMES) or MDM complex, composed of MMM1, MDM10, MDM12 and MDM34. Associates with the mitochondrial outer membrane sorting assembly machinery SAM(core) complex.

Its subcellular location is the mitochondrion outer membrane. Component of the ERMES/MDM complex, which serves as a molecular tether to connect the endoplasmic reticulum and mitochondria. Components of this complex are involved in the control of mitochondrial shape and protein biogenesis and may function in phospholipid exchange. MDM10 is involved in the late assembly steps of the general translocase of the mitochondrial outer membrane (TOM complex). Functions in the TOM40-specific route of the assembly of outer membrane beta-barrel proteins, including the association of TOM40 with the receptor TOM22 and small TOM proteins. Can associate with the SAM(core) complex as well as the MDM12-MMM1 complex, both involved in late steps of the major beta-barrel assembly pathway, that is responsible for biogenesis of all outer membrane beta-barrel proteins. May act as a switch that shuttles between both complexes and channels precursor proteins into the TOM40-specific pathway. Plays a role in mitochondrial morphology and in the inheritance of mitochondria. The polypeptide is Mitochondrial distribution and morphology protein 10 (Zygosaccharomyces rouxii (strain ATCC 2623 / CBS 732 / NBRC 1130 / NCYC 568 / NRRL Y-229)).